Consider the following 120-residue polypeptide: Putative membrane protein insertion efficiency factor (120 aa).

Residues 93-120 form a disordered region; sequence GRSCQTDVDGANDDWNPASKRGERESFV.

This sequence belongs to the UPF0161 family.

The protein resides in the cell membrane. Functionally, could be involved in insertion of integral membrane proteins into the membrane. This Mycobacterium bovis (strain ATCC BAA-935 / AF2122/97) protein is Putative membrane protein insertion efficiency factor.